The chain runs to 385 residues: Pepsin A (385 aa).

The signal sequence occupies residues 1–15; sequence MKWLLLLSLVVLSEC. Positions 16-59 are cleaved as a propeptide — activation peptide; that stretch reads LVKVPLVRKKSLRQNLIKNGKLKDFLKTHKHNPASKYFPEAAAL. Positions 73 to 382 constitute a Peptidase A1 domain; the sequence is YFGTIGIGTP…DRANNKVGLA (310 aa). Asp91 is an active-site residue. A disulfide bridge links Cys104 with Cys109. Residue Ser127 is modified to Phosphoserine. A disulfide bond links Cys265 and Cys269. Asp274 is a catalytic residue. An intrachain disulfide couples Cys308 to Cys341.

It belongs to the peptidase A1 family. Minor amounts of the active enzyme occur with 'Ala-58' at the amino end.

Its subcellular location is the secreted. The catalysed reaction is Preferential cleavage: hydrophobic, preferably aromatic, residues in P1 and P1' positions. Cleaves 1-Phe-|-Val-2, 4-Gln-|-His-5, 13-Glu-|-Ala-14, 14-Ala-|-Leu-15, 15-Leu-|-Tyr-16, 16-Tyr-|-Leu-17, 23-Gly-|-Phe-24, 24-Phe-|-Phe-25 and 25-Phe-|-Tyr-26 bonds in the B chain of insulin.. Functionally, shows particularly broad specificity; although bonds involving phenylalanine and leucine are preferred, many others are also cleaved to some extent. This chain is Pepsin A (PGA), found in Sus scrofa (Pig).